Reading from the N-terminus, the 606-residue chain is Probable potassium transport system protein Kup (606 aa).

12 helical membrane-spanning segments follow: residues 18 to 38, 46 to 66, 97 to 117, 138 to 158, 166 to 186, 212 to 232, 247 to 267, 287 to 307, 339 to 359, 368 to 388, 395 to 415, and 418 to 438; these read GLVF…VFAL, VFGI…AEYA, LTFV…DGVI, GLHQ…LFVF, VAGA…LSGA, GLAG…GEAL, AWYI…AFII, LYIP…QAMI, IYIG…MLVF, AYGL…ILIL, WKAV…TACL, and LPHG…TILV.

It belongs to the HAK/KUP transporter (TC 2.A.72) family.

The protein resides in the cell inner membrane. It catalyses the reaction K(+)(in) + H(+)(in) = K(+)(out) + H(+)(out). Transport of potassium into the cell. Likely operates as a K(+):H(+) symporter. The polypeptide is Probable potassium transport system protein Kup (Trichlorobacter lovleyi (strain ATCC BAA-1151 / DSM 17278 / SZ) (Geobacter lovleyi)).